The following is a 256-amino-acid chain: Mannose-specific lectin 1 (256 aa).

The N-terminal stretch at 1-23 (MAKLLLFLLPAILGLLVPRSAVA) is a signal peptide. Bulb-type lectin domains are found at residues 26–131 (TNYL…PWVR) and 145–252 (NNLL…SKRS). Residues 51–55 (QDDCN), Tyr-59, Trp-63, Gln-64, 170–174 (QGDCN), Tyr-178, and 182–185 (YGWQ) contribute to the beta-D-mannose site. The short motif at 51 to 59 (QDDCNLVLY) is the Carbohydrate-binding motif 1 element. Disulfide bonds link Cys-54/Cys-74 and Cys-173/Cys-195. The short motif at 170 to 178 (QGDCNLVLY) is the Carbohydrate-binding motif 2 element.

Forms heterodimers.

Its subcellular location is the secreted. Mannose-specific lectin. Shows agglutinating activity towards erythrocytes from rabbit. In Remusatia vivipara (Hitchhiker elephant ear), this protein is Mannose-specific lectin 1.